A 265-amino-acid chain; its full sequence is MATCSAACARPAVVVFASPAAARRRAASSVYLPGRPLRGGGVVRCSAGPVSGGMISKKVAELWAAARSASPVAVIAAVAGAAVVYKVGSSLLAPPPPPARPREEPSEEAPPPPEPVQVGEITAEELLQYDGSDPEKPLLMAIKGQIYDVSQSRLFYGPGGPYALFAGKDASRALAKMSFEPQDLTDDISGLSLLELSALQDWEYKFSSKYVKVGTIKKVLVEQGGDSTADAIEEAAVDGEDSILTAKMSNQLLYEEEMEVGSDDP.

The helical transmembrane segment at 63 to 85 (WAAARSASPVAVIAAVAGAAVVY) threads the bilayer. The segment at 94–116 (PPPPPARPREEPSEEAPPPPEPV) is disordered. The Cytochrome b5 heme-binding domain maps to 118–217 (VGEITAEELL…SKYVKVGTIK (100 aa)). The steroid-binding stretch occupies residues 120–217 (EITAEELLQY…SKYVKVGTIK (98 aa)).

This sequence belongs to the cytochrome b5 family. MAPR subfamily.

Its subcellular location is the cell membrane. Binds multiple steroid compounds. This is Membrane steroid-binding protein 2 from Oryza sativa subsp. japonica (Rice).